Here is a 588-residue protein sequence, read N- to C-terminus: Histone-arginine methyltransferase CARM1 (588 aa).

The SAM-dependent MTase PRMT-type domain maps to 120 to 427; that stretch reads AVQYFQFYGY…KRQSYDISIV (308 aa). Positions 133, 142, 166, 188, 217, and 245 each coordinate S-adenosyl-L-methionine. The segment at 473-588 is transactivation domain; sequence TGGTYSMSQG…IPSNTMHYGS (116 aa).

Belongs to the class I-like SAM-binding methyltransferase superfamily. Protein arginine N-methyltransferase family. Homodimer.

It localises to the nucleus. The protein resides in the cytoplasm. Its subcellular location is the chromosome. The catalysed reaction is L-arginyl-[protein] + 2 S-adenosyl-L-methionine = N(omega),N(omega)-dimethyl-L-arginyl-[protein] + 2 S-adenosyl-L-homocysteine + 2 H(+). Its function is as follows. Methylates (mono- and asymmetric dimethylation) the guanidino nitrogens of arginyl residues in several proteins involved in DNA packaging, transcription regulation, pre-mRNA splicing, and mRNA stability. Recruited to promoters upon gene activation together with histone acetyltransferases from EP300/P300 and p160 families, methylates histone H3 at 'Arg-17' (H3R17me) and activates transcription via chromatin remodeling. The sequence is that of Histone-arginine methyltransferase CARM1 (carm1) from Danio rerio (Zebrafish).